Consider the following 349-residue polypeptide: Probable esterase Cgl0839 (349 aa).

In terms of domain architecture, AB hydrolase-1 spans glycine 60–phenylalanine 329. The Nucleophile role is filled by serine 142. Active-site residues include aspartate 296 and histidine 325.

Belongs to the AB hydrolase superfamily. Acetyl esterase family. In terms of assembly, homodimer.

Esterase that catalyzes the hydrolysis of 4-nitrophenyl acetate in vitro. This Corynebacterium glutamicum (strain ATCC 13032 / DSM 20300 / JCM 1318 / BCRC 11384 / CCUG 27702 / LMG 3730 / NBRC 12168 / NCIMB 10025 / NRRL B-2784 / 534) protein is Probable esterase Cgl0839.